Reading from the N-terminus, the 274-residue chain is NH(3)-dependent NAD(+) synthetase (274 aa).

An ATP-binding site is contributed by Gly-46–Ser-53. Mg(2+) is bound at residue Asp-52. Arg-140 contributes to the deamido-NAD(+) binding site. Thr-160 is a binding site for ATP. A Mg(2+)-binding site is contributed by Glu-165. 2 residues coordinate deamido-NAD(+): Lys-173 and Asp-180. Residues Lys-189 and Thr-211 each contribute to the ATP site. Residue His-260–Lys-261 coordinates deamido-NAD(+).

The protein belongs to the NAD synthetase family. In terms of assembly, homodimer.

It carries out the reaction deamido-NAD(+) + NH4(+) + ATP = AMP + diphosphate + NAD(+) + H(+). The protein operates within cofactor biosynthesis; NAD(+) biosynthesis; NAD(+) from deamido-NAD(+) (ammonia route): step 1/1. Its function is as follows. Catalyzes the ATP-dependent amidation of deamido-NAD to form NAD. Uses ammonia as a nitrogen source. This Streptococcus mutans serotype c (strain ATCC 700610 / UA159) protein is NH(3)-dependent NAD(+) synthetase.